The primary structure comprises 370 residues: 3-isopropylmalate dehydrogenase (370 aa).

Residue 77-90 coordinates NAD(+); sequence GPKWDAVPYDARPE. Arg-97, Arg-107, Arg-135, and Asp-226 together coordinate substrate. Asp-226, Asp-250, and Asp-254 together coordinate Mg(2+). Position 290 to 302 (290 to 302) interacts with NAD(+); it reads GSAPDIAGKGLAN.

The protein belongs to the isocitrate and isopropylmalate dehydrogenases family. LeuB type 1 subfamily. In terms of assembly, homodimer. Mg(2+) serves as cofactor. Mn(2+) is required as a cofactor.

It is found in the cytoplasm. The catalysed reaction is (2R,3S)-3-isopropylmalate + NAD(+) = 4-methyl-2-oxopentanoate + CO2 + NADH. It functions in the pathway amino-acid biosynthesis; L-leucine biosynthesis; L-leucine from 3-methyl-2-oxobutanoate: step 3/4. Its function is as follows. Catalyzes the oxidation of 3-carboxy-2-hydroxy-4-methylpentanoate (3-isopropylmalate) to 3-carboxy-4-methyl-2-oxopentanoate. The product decarboxylates to 4-methyl-2 oxopentanoate. This Rhodopseudomonas palustris (strain HaA2) protein is 3-isopropylmalate dehydrogenase.